We begin with the raw amino-acid sequence, 465 residues long: ATP synthase subunit beta (465 aa).

148–155 (GGAGVGKT) is a binding site for ATP.

The protein belongs to the ATPase alpha/beta chains family. F-type ATPases have 2 components, CF(1) - the catalytic core - and CF(0) - the membrane proton channel. CF(1) has five subunits: alpha(3), beta(3), gamma(1), delta(1), epsilon(1). CF(0) has three main subunits: a(1), b(2) and c(9-12). The alpha and beta chains form an alternating ring which encloses part of the gamma chain. CF(1) is attached to CF(0) by a central stalk formed by the gamma and epsilon chains, while a peripheral stalk is formed by the delta and b chains.

Its subcellular location is the cell inner membrane. The catalysed reaction is ATP + H2O + 4 H(+)(in) = ADP + phosphate + 5 H(+)(out). Functionally, produces ATP from ADP in the presence of a proton gradient across the membrane. The catalytic sites are hosted primarily by the beta subunits. This Neisseria gonorrhoeae (strain ATCC 700825 / FA 1090) protein is ATP synthase subunit beta.